The following is a 112-amino-acid chain: MLDELDGAMIISKTLTKTDIVGNVALPKAQVMSVLTRMNGVTDEGLDNGFEVQVHDIMEDDLYTVTLKRIDDMKYYFGTGWSTMKHSLDLVEGDVLKLYWDQFENKFIVLNF.

The segment at residues Asp19–Phe112 is a DNA-binding region (TF-B3).

It localises to the nucleus. This Arabidopsis thaliana (Mouse-ear cress) protein is B3 domain-containing protein At1g43171.